The sequence spans 56 residues: Large ribosomal subunit protein bL32 (56 aa).

The protein belongs to the bacterial ribosomal protein bL32 family.

The chain is Large ribosomal subunit protein bL32 from Edwardsiella ictaluri (strain 93-146).